We begin with the raw amino-acid sequence, 145 residues long: Small ribosomal subunit protein uS12 (145 aa).

Belongs to the universal ribosomal protein uS12 family. As to quaternary structure, component of the small ribosomal subunit. Mature ribosomes consist of a small (40S) and a large (60S) subunit. The 40S subunit contains about 32 different proteins and 1 molecule of RNA (18S). The 60S subunit contains 45 different proteins and 3 molecules of RNA (25S, 5.8S and 5S).

It localises to the cytoplasm. Component of the ribosome, a large ribonucleoprotein complex responsible for the synthesis of proteins in the cell. The small ribosomal subunit (SSU) binds messenger RNAs (mRNAs) and translates the encoded message by selecting cognate aminoacyl-transfer RNA (tRNA) molecules. The large subunit (LSU) contains the ribosomal catalytic site termed the peptidyl transferase center (PTC), which catalyzes the formation of peptide bonds, thereby polymerizing the amino acids delivered by tRNAs into a polypeptide chain. The nascent polypeptides leave the ribosome through a tunnel in the LSU and interact with protein factors that function in enzymatic processing, targeting, and the membrane insertion of nascent chains at the exit of the ribosomal tunnel. This is Small ribosomal subunit protein uS12 (RPS23A) from Candida albicans (strain SC5314 / ATCC MYA-2876) (Yeast).